Here is a 632-residue protein sequence, read N- to C-terminus: Gamma-aminobutyric acid receptor subunit theta (632 aa).

A signal peptide spans 1–21 (MGIRGMLRAAVILLLIRTWLA). Residues 22 to 268 (EGNYPSPIPK…FQVQREVNSY (247 aa)) lie on the Extracellular side of the membrane. N-linked (GlcNAc...) asparagine glycosylation occurs at Asn127. Cys183 and Cys197 form a disulfide bridge. Residues 269-289 (LVQVYWPTVLTTITSWISFWM) form a helical membrane-spanning segment. At 290–297 (NYDSSAAR) the chain is on the cytoplasmic side. The helical transmembrane segment at 298–315 (VTIGLTSMLILTTIDSHL) threads the bilayer. Topologically, residues 316 to 326 (RDKLPNISCIK) are extracellular. A helical transmembrane segment spans residues 327–347 (AIDIYILVCLFFVFLSLLEYV). Topologically, residues 348 to 611 (YINYLFYSRG…DYVPKVDKWS (264 aa)) are cytoplasmic. Disordered regions lie at residues 410-458 (SPES…STSE) and 491-523 (HGVT…LHHG). The span at 413-425 (SLGSLTSTSEQAQ) shows a compositional bias: polar residues. The segment covering 426-439 (LATSESLSPLTSLS) has biased composition (low complexity). Residues 448–458 (ESLSDLPSTSE) show a composition bias toward polar residues. The segment covering 491-511 (HGVTHDHEDSNESLSSDERHG) has biased composition (basic and acidic residues). A helical membrane pass occupies residues 612-632 (RFLFPLAFGLFNIVYWVYHMY).

It belongs to the ligand-gated ion channel (TC 1.A.9) family. Gamma-aminobutyric acid receptor (TC 1.A.9.5) subfamily. GABRQ sub-subfamily. Heteropentamer, formed by a combination of alpha (GABRA1-6), beta (GABRB1-3), gamma (GABRG1-3), delta (GABRD), epsilon (GABRE), rho (GABRR1-3), pi (GABRP) and theta (GABRQ) chains, each subunit exhibiting distinct physiological and pharmacological properties. In terms of tissue distribution, expressed in brain.

It is found in the postsynaptic cell membrane. Its subcellular location is the cell membrane. The enzyme catalyses chloride(in) = chloride(out). Potentiated by etomidate, propofol, pregnanolone and pentobarbital. Functionally, theta subunit of the heteropentameric ligand-gated chloride channel gated by gamma-aminobutyric acid (GABA), a major inhibitory neurotransmitter in the brain. GABA-gated chloride channels, also named GABA(A) receptors (GABAAR), consist of five subunits arranged around a central pore and contain GABA active binding site(s) located at the alpha and beta subunit interfaces. When activated by GABA, GABAARs selectively allow the flow of chloride anions across the cell membrane down their electrochemical gradient. The chain is Gamma-aminobutyric acid receptor subunit theta from Homo sapiens (Human).